Consider the following 177-residue polypeptide: Nucleoside triphosphate/diphosphate phosphatase (177 aa).

Residue Arg-23 is the Proton donor of the active site. Asn-87, Asp-103, Asp-105, Asp-107, Asp-120, and Glu-123 together coordinate Mg(2+).

It belongs to the Ntdp family. Requires Mg(2+) as cofactor.

The enzyme catalyses a ribonucleoside 5'-triphosphate + H2O = a ribonucleoside 5'-diphosphate + phosphate + H(+). It carries out the reaction a ribonucleoside 5'-diphosphate + H2O = a ribonucleoside 5'-phosphate + phosphate + H(+). Its function is as follows. Has nucleoside phosphatase activity towards nucleoside triphosphates and nucleoside diphosphates. This Streptococcus pyogenes serotype M3 (strain ATCC BAA-595 / MGAS315) protein is Nucleoside triphosphate/diphosphate phosphatase.